A 264-amino-acid polypeptide reads, in one-letter code: 3-methyl-2-oxobutanoate hydroxymethyltransferase (264 aa).

Residues aspartate 44 and aspartate 83 each coordinate Mg(2+). Residues aspartate 44 to serine 45, aspartate 83, and lysine 112 each bind 3-methyl-2-oxobutanoate. Glutamate 114 serves as a coordination point for Mg(2+). The active-site Proton acceptor is the glutamate 181.

This sequence belongs to the PanB family. In terms of assembly, homodecamer; pentamer of dimers. Mg(2+) serves as cofactor.

The protein localises to the cytoplasm. The catalysed reaction is 3-methyl-2-oxobutanoate + (6R)-5,10-methylene-5,6,7,8-tetrahydrofolate + H2O = 2-dehydropantoate + (6S)-5,6,7,8-tetrahydrofolate. Its pathway is cofactor biosynthesis; coenzyme A biosynthesis. Functionally, catalyzes the reversible reaction in which hydroxymethyl group from 5,10-methylenetetrahydrofolate is transferred onto alpha-ketoisovalerate to form ketopantoate. The sequence is that of 3-methyl-2-oxobutanoate hydroxymethyltransferase from Pyrobaculum arsenaticum (strain DSM 13514 / JCM 11321 / PZ6).